We begin with the raw amino-acid sequence, 388 residues long: GTPase Obg (388 aa).

The region spanning 1 to 159 (MKFIDEASIR…RSLRLELLLL (159 aa)) is the Obg domain. The OBG-type G domain occupies 160–333 (ADVGLLGMPN…LSLKLLDYIA (174 aa)). Residues 166–173 (GMPNAGKS), 191–195 (FTTLV), 213–216 (DIPG), 283–286 (NKTD), and 314–316 (SAF) each bind GTP. 2 residues coordinate Mg(2+): Ser173 and Thr193.

This sequence belongs to the TRAFAC class OBG-HflX-like GTPase superfamily. OBG GTPase family. Monomer. The cofactor is Mg(2+).

It is found in the cytoplasm. An essential GTPase which binds GTP, GDP and possibly (p)ppGpp with moderate affinity, with high nucleotide exchange rates and a fairly low GTP hydrolysis rate. Plays a role in control of the cell cycle, stress response, ribosome biogenesis and in those bacteria that undergo differentiation, in morphogenesis control. This is GTPase Obg from Shewanella denitrificans (strain OS217 / ATCC BAA-1090 / DSM 15013).